The chain runs to 203 residues: Peptide deformylase (203 aa).

2 residues coordinate Fe cation: cysteine 121 and histidine 163. Glutamate 164 is a catalytic residue. Histidine 167 lines the Fe cation pocket.

It belongs to the polypeptide deformylase family. It depends on Fe(2+) as a cofactor.

It catalyses the reaction N-terminal N-formyl-L-methionyl-[peptide] + H2O = N-terminal L-methionyl-[peptide] + formate. Functionally, removes the formyl group from the N-terminal Met of newly synthesized proteins. Requires at least a dipeptide for an efficient rate of reaction. N-terminal L-methionine is a prerequisite for activity but the enzyme has broad specificity at other positions. The protein is Peptide deformylase of Prochlorococcus marinus (strain MIT 9515).